Here is a 148-residue protein sequence, read N- to C-terminus: uncharacterized protein (148 aa).

3 helical membrane-spanning segments follow: residues 20-42, 52-74, and 118-135; these read YYSK…IANY, YFLM…VRCY, and IIRY…CTYI.

It localises to the cell membrane. This is an uncharacterized protein from Rickettsia prowazekii (strain Madrid E).